A 24-amino-acid chain; its full sequence is U1-poneritoxin-Na1a (24 aa).

Belongs to the non-disulfide-bridged peptide (NDBP) superfamily. Medium-length antimicrobial peptide (group 3) family. Ponericin-W subfamily. Expressed by the venom gland.

Its subcellular location is the secreted. It is found in the target cell membrane. In terms of biological role, has a broad spectrum of activity against both Gram-positive and Gram-negative bacteria and S.cerevisiae. Has insecticidal and hemolytic activities. May act by disrupting the integrity of the bacterial cell membrane. This Neoponera apicalis (Ant) protein is U1-poneritoxin-Na1a.